The sequence spans 286 residues: Fructose-bisphosphate aldolase (286 aa).

Ser50 contacts D-glyceraldehyde 3-phosphate. Asp85 functions as the Proton donor in the catalytic mechanism. The Zn(2+) site is built by His86, Asp107, Glu137, and His181. Gly182 is a dihydroxyacetone phosphate binding site. His209 is a binding site for Zn(2+). Residues 210–212 and 231–234 contribute to the dihydroxyacetone phosphate site; these read GGT and NVNT.

Belongs to the class II fructose-bisphosphate aldolase family. It depends on Zn(2+) as a cofactor.

The enzyme catalyses beta-D-fructose 1,6-bisphosphate = D-glyceraldehyde 3-phosphate + dihydroxyacetone phosphate. Its pathway is carbohydrate degradation; glycolysis; D-glyceraldehyde 3-phosphate and glycerone phosphate from D-glucose: step 4/4. In terms of biological role, catalyzes the aldol condensation of dihydroxyacetone phosphate (DHAP or glycerone-phosphate) with glyceraldehyde 3-phosphate (G3P) to form fructose 1,6-bisphosphate (FBP) in gluconeogenesis and the reverse reaction in glycolysis. The chain is Fructose-bisphosphate aldolase (fba) from Staphylococcus epidermidis (strain ATCC 35984 / DSM 28319 / BCRC 17069 / CCUG 31568 / BM 3577 / RP62A).